Consider the following 347-residue polypeptide: Leucine-rich repeat-containing protein 69 (347 aa).

LRR repeat units lie at residues glycine 38–threonine 60, glutamine 61–leucine 82, serine 84–glycine 105, asparagine 108–leucine 129, serine 131–glutamate 153, asparagine 154–leucine 175, lysine 177–lysine 199, and lysine 200–lysine 222.

Belongs to the LRRC69 family.

The chain is Leucine-rich repeat-containing protein 69 (LRRC69) from Homo sapiens (Human).